The sequence spans 237 residues: Phosphoribosylaminoimidazole-succinocarboxamide synthase (237 aa).

The protein belongs to the SAICAR synthetase family.

The enzyme catalyses 5-amino-1-(5-phospho-D-ribosyl)imidazole-4-carboxylate + L-aspartate + ATP = (2S)-2-[5-amino-1-(5-phospho-beta-D-ribosyl)imidazole-4-carboxamido]succinate + ADP + phosphate + 2 H(+). It participates in purine metabolism; IMP biosynthesis via de novo pathway; 5-amino-1-(5-phospho-D-ribosyl)imidazole-4-carboxamide from 5-amino-1-(5-phospho-D-ribosyl)imidazole-4-carboxylate: step 1/2. The chain is Phosphoribosylaminoimidazole-succinocarboxamide synthase from Erwinia tasmaniensis (strain DSM 17950 / CFBP 7177 / CIP 109463 / NCPPB 4357 / Et1/99).